The following is a 303-amino-acid chain: Suppressor of silencing P0 (303 aa).

It belongs to the polerovirus P0 protein family.

In terms of biological role, suppressor of RNA-mediated gene silencing. This is Suppressor of silencing P0 from Pea enation mosaic virus-1 (strain WSG) (PEMV-1).